A 284-amino-acid chain; its full sequence is L-ribulose-5-phosphate 3-epimerase UlaE (284 aa).

The protein belongs to the L-ribulose-5-phosphate 3-epimerase family.

It catalyses the reaction L-ribulose 5-phosphate = L-xylulose 5-phosphate. It functions in the pathway cofactor degradation; L-ascorbate degradation; D-xylulose 5-phosphate from L-ascorbate: step 3/4. Catalyzes the isomerization of L-xylulose-5-phosphate to L-ribulose-5-phosphate. Is involved in the anaerobic L-ascorbate utilization. This Escherichia coli O8 (strain IAI1) protein is L-ribulose-5-phosphate 3-epimerase UlaE.